The chain runs to 262 residues: Urease accessory protein UreD (262 aa).

It belongs to the UreD family. UreD, UreF and UreG form a complex that acts as a GTP-hydrolysis-dependent molecular chaperone, activating the urease apoprotein by helping to assemble the nickel containing metallocenter of UreC. The UreE protein probably delivers the nickel.

The protein resides in the cytoplasm. In terms of biological role, required for maturation of urease via the functional incorporation of the urease nickel metallocenter. This is Urease accessory protein UreD from Acetivibrio thermocellus (strain ATCC 27405 / DSM 1237 / JCM 9322 / NBRC 103400 / NCIMB 10682 / NRRL B-4536 / VPI 7372) (Clostridium thermocellum).